Here is a 368-residue protein sequence, read N- to C-terminus: Histone macroH2A1.1 (368 aa).

The tract at residues Ala154–Lys177 is disordered. One can recognise a Macro domain in the interval Thr184 to Asn368. Positions 203, 204, 225, 226, 275, 313, 314, 315, 316, and 317 each coordinate a glycoprotein.

This sequence belongs to the histone H2A family. As to quaternary structure, the nucleosome is a histone octamer containing two molecules each of H2A, H2B, H3 and H4 assembled in one H3-H4 heterotetramer and two H2A-H2B heterodimers.

The protein localises to the nucleus. Its subcellular location is the chromosome. In terms of biological role, variant histone H2A which replaces conventional H2A in a subset of nucleosomes where it represses transcription. Nucleosomes wrap and compact DNA into chromatin, limiting DNA accessibility to the cellular machineries which require DNA as a template. Histones thereby play a central role in transcription regulation, DNA repair, DNA replication and chromosomal stability. DNA accessibility is regulated via a complex set of post-translational modifications of histones, also called histone code, and nucleosome remodeling. Its function is as follows. Specifically binds poly-ADP-ribose and plays a key role in NAD(+) metabolism. Able to bind to the ends of poly-ADP-ribose chains created by PARP1 and cap them. This prevents PARP1 from further addition of ADP-ribose and thus limits the consumption of nuclear NAD(+), allowing the cell to maintain proper NAD(+) levels in both the nucleus and the mitochondria to promote proper mitochondrial respiration. This is Histone macroH2A1.1 from Capsaspora owczarzaki (strain ATCC 30864).